The primary structure comprises 97 residues: uncharacterized protein (97 aa).

Transmembrane regions (helical) follow at residues 5–25, 27–47, and 77–97; these read TLVA…SLSV, MVFV…LICY, and IISI…VFIL.

It is found in the membrane. This is an uncharacterized protein from Saccharomyces cerevisiae (strain ATCC 204508 / S288c) (Baker's yeast).